Consider the following 334-residue polypeptide: Glycerol-1-phosphate dehydrogenase [NAD(P)+] (334 aa).

Residues 77–81 (GRPID) and 99–102 (TTAS) each bind NAD(+). Asp-104 is a substrate binding site. Ser-108 contributes to the NAD(+) binding site. A substrate-binding site is contributed by Asp-147. Zn(2+) contacts are provided by Asp-147 and His-225. Residue His-229 coordinates substrate. A Zn(2+)-binding site is contributed by His-246.

It belongs to the glycerol-1-phosphate dehydrogenase family. Requires Zn(2+) as cofactor.

It is found in the cytoplasm. It carries out the reaction sn-glycerol 1-phosphate + NAD(+) = dihydroxyacetone phosphate + NADH + H(+). The enzyme catalyses sn-glycerol 1-phosphate + NADP(+) = dihydroxyacetone phosphate + NADPH + H(+). Its pathway is membrane lipid metabolism; glycerophospholipid metabolism. Catalyzes the NAD(P)H-dependent reduction of dihydroxyacetonephosphate (DHAP or glycerone phosphate) to glycerol 1-phosphate (G1P). The G1P thus generated is used as the glycerophosphate backbone of phospholipids in the cellular membranes of Archaea. This chain is Glycerol-1-phosphate dehydrogenase [NAD(P)+], found in Methanococcus maripaludis (strain C7 / ATCC BAA-1331).